Reading from the N-terminus, the 735-residue chain is Peroxisomal multifunctional enzyme type 2 (735 aa).

Residues 1–305 (MASPLRFDGR…IEVLHKIDSE (305 aa)) are (3R)-hydroxyacyl-CoA dehydrogenase. NAD(+) is bound by residues 16-40 (GAGGGLGRAYALAFAERGALVVVND), L21, and D40. Position 46 is an N6-acetyllysine; alternate (K46). K46 is subject to N6-succinyllysine; alternate. S52 bears the Phosphoserine mark. Residues K57 and K68 each carry the N6-succinyllysine modification. 75-76 (SV) is a binding site for NAD(+). An N6-succinyllysine modification is found at K84. Position 99 (N99) interacts with NAD(+). Residue S151 coordinates substrate. Y164 (proton acceptor) is an active-site residue. NAD(+)-binding positions include 164 to 168 (YSAAK) and 196 to 199 (AGSR). The residue at position 265 (T265) is a Phosphothreonine. K275 carries the post-translational modification N6-succinyllysine. Phosphoserine is present on residues S304 and S308. Residues 321-621 (SGFAGVVGHK…AQTPSEGGAL (301 aa)) are enoyl-CoA hydratase 2. N6-succinyllysine is present on K355. 405-406 (HG) is a (3R)-3-hydroxydecanoyl-CoA binding site. K423 bears the N6-succinyllysine mark. (3R)-3-hydroxydecanoyl-CoA contacts are provided by residues K434, 509–514 (DSNPLH), G532, and F562. The MaoC-like domain occupies 483-599 (VPSRPPDAVL…QETGDIVISN (117 aa)). K564 is modified (N6-acetyllysine). An N6-succinyllysine mark is found at K578 and K662. The SCP2 domain occupies 623–735 (SALVFGEIGR…QMILKDYAKL (113 aa)). The residue at position 668 (K668) is an N6-acetyllysine. Positions 705 and 723 each coordinate substrate. Position 724 is an N6-succinyllysine (K724). Residues 733–735 (AKL) carry the Microbody targeting signal motif.

It belongs to the short-chain dehydrogenases/reductases (SDR) family. Homodimer.

The protein resides in the peroxisome. It catalyses the reaction a (3R)-3-hydroxyacyl-CoA + NAD(+) = a 3-oxoacyl-CoA + NADH + H(+). It carries out the reaction (24R,25R)-3alpha,7alpha,12alpha,24-tetrahydroxy-5beta-cholestan-26-oyl-CoA = (24E)-3alpha,7alpha,12alpha-trihydroxy-5beta-cholest-24-en-26-oyl-CoA + H2O. The catalysed reaction is a (3R)-3-hydroxyacyl-CoA = a (2E)-enoyl-CoA + H2O. The enzyme catalyses (2E)-octenoyl-CoA + H2O = (3R)-hydroxyoctanoyl-CoA. It catalyses the reaction (3R)-hydroxyoctanoyl-CoA + NAD(+) = 3-oxooctanoyl-CoA + NADH + H(+). It carries out the reaction (3R)-hydroxyhexadecanoyl-CoA + NAD(+) = 3-oxohexadecanoyl-CoA + NADH + H(+). The catalysed reaction is (2E)-hexadecenedioyl-CoA + H2O = (3R)-hydroxyhexadecanedioyl-CoA. The enzyme catalyses (3R)-hydroxyhexadecanedioyl-CoA + NAD(+) = 3-oxohexadecanedioyl-CoA + NADH + H(+). It catalyses the reaction (3R)-hydroxyhexadecanoyl-CoA = (2E)-hexadecenoyl-CoA + H2O. It carries out the reaction (3R)-3-hydroxydecanoyl-CoA = (2E)-decenoyl-CoA + H2O. The catalysed reaction is (3R)-3-hydroxydecanoyl-CoA + NAD(+) = 3-oxodecanoyl-CoA + NADH + H(+). The enzyme catalyses (24R,25R)-3alpha,7alpha,12alpha,24-tetrahydroxy-5beta-cholestan-26-oyl-CoA + NAD(+) = 3alpha,7alpha,12alpha-trihydroxy-24-oxo-5beta-cholestan-26-oyl-CoA + NADH + H(+). It functions in the pathway lipid metabolism; fatty acid beta-oxidation. Functionally, bifunctional enzyme acting on the peroxisomal fatty acid beta-oxidation pathway. Catalyzes two of the four reactions in fatty acid degradation: hydration of 2-enoyl-CoA (trans-2-enoyl-CoA) to produce (3R)-3-hydroxyacyl-CoA, and dehydrogenation of (3R)-3-hydroxyacyl-CoA to produce 3-ketoacyl-CoA (3-oxoacyl-CoA), which is further metabolized by SCPx. Can use straight-chain and branched-chain fatty acids, as well as bile acid intermediates as substrates. The polypeptide is Peroxisomal multifunctional enzyme type 2 (Rattus norvegicus (Rat)).